The primary structure comprises 361 residues: MDIFGENKTQMNTTTPTENWTSVYSIVRWIQMTMAVLSILGAGSIILYAAFQRLVKKPEVLPLFLLSLTDLLLALSWLCGGLLFTQSCNSYATCYNLHIVEQTLYMASFFYTLHYVWVLYTGLNGKYHRRLNGFPAEAARTRNCRCLGPVLSCLLPLLLTAPVFVAGNVFQCYTNFTQPYRCLLMHTGAVYLTSSASPELTACSIIQEYCMAIFLGTFLITIVGMSIFMGKARSLYKRVVTSQGFFGGSHWTTLRLLERRMVLYPSAFFFCWGPALLLATMMLVKPDVIEGKMGVALYILQAFTSASQGLLNCLVYGWTQKHFRSLSSSTVRDANTQTPLLRSQKPNYAALHSAASLTNFV.

7 consecutive transmembrane segments (helical) span residues 29 to 49, 64 to 84, 103 to 123, 147 to 167, 210 to 230, 261 to 281, and 295 to 315; these read WIQM…ILYA, FLLS…GLLF, TLYM…YTGL, LGPV…FVAG, CMAI…IFMG, MVLY…LATM, and VALY…NCLV.

It is found in the membrane. This chain is Transmembrane protein 116 (tmem116), found in Danio rerio (Zebrafish).